A 417-amino-acid polypeptide reads, in one-letter code: NADH-quinone oxidoreductase subunit D (417 aa).

The protein belongs to the complex I 49 kDa subunit family. In terms of assembly, NDH-1 is composed of 14 different subunits. Subunits NuoB, C, D, E, F, and G constitute the peripheral sector of the complex.

It localises to the cell inner membrane. The enzyme catalyses a quinone + NADH + 5 H(+)(in) = a quinol + NAD(+) + 4 H(+)(out). Functionally, NDH-1 shuttles electrons from NADH, via FMN and iron-sulfur (Fe-S) centers, to quinones in the respiratory chain. The immediate electron acceptor for the enzyme in this species is believed to be ubiquinone. Couples the redox reaction to proton translocation (for every two electrons transferred, four hydrogen ions are translocated across the cytoplasmic membrane), and thus conserves the redox energy in a proton gradient. The polypeptide is NADH-quinone oxidoreductase subunit D (Polaromonas sp. (strain JS666 / ATCC BAA-500)).